We begin with the raw amino-acid sequence, 388 residues long: Chorismate synthase (388 aa).

2 residues coordinate NADP(+): R39 and R45. FMN contacts are provided by residues 132–134, 251–252, G296, 311–315, and R337; these read RSS, NA, and KPIPT.

Belongs to the chorismate synthase family. Homotetramer. The cofactor is FMNH2.

The catalysed reaction is 5-O-(1-carboxyvinyl)-3-phosphoshikimate = chorismate + phosphate. It functions in the pathway metabolic intermediate biosynthesis; chorismate biosynthesis; chorismate from D-erythrose 4-phosphate and phosphoenolpyruvate: step 7/7. Catalyzes the anti-1,4-elimination of the C-3 phosphate and the C-6 proR hydrogen from 5-enolpyruvylshikimate-3-phosphate (EPSP) to yield chorismate, which is the branch point compound that serves as the starting substrate for the three terminal pathways of aromatic amino acid biosynthesis. This reaction introduces a second double bond into the aromatic ring system. This Staphylococcus aureus (strain MW2) protein is Chorismate synthase.